Consider the following 260-residue polypeptide: UPF0246 protein APL_0602 (260 aa).

Belongs to the UPF0246 family.

This Actinobacillus pleuropneumoniae serotype 5b (strain L20) protein is UPF0246 protein APL_0602.